The primary structure comprises 68 residues: Large ribosomal subunit protein uL29 (68 aa).

It belongs to the universal ribosomal protein uL29 family.

This Nitrobacter hamburgensis (strain DSM 10229 / NCIMB 13809 / X14) protein is Large ribosomal subunit protein uL29.